A 300-amino-acid polypeptide reads, in one-letter code: MGTEGKAGRKLLFLFTSMILGSLVQGKGSVYTAQSDVQVPENESIKLTCTYSGFSSPRVEWKFVQGSTTALVCYNSQITAPYADRVTFSSSGITFSSVTRKDNGEYTCMVSEEGGQNYGEVSIHLTVLVPPSKPTISVPSSVTIGNRAVLTCSEHDGSPPSEYSWFKDGISMLTADAKKTRAFMNSSFTIDPKSGDLIFDPVTAFDSGEYYCQAQNGYGTAMRSEAAHMDAVELNVGGIVAAVLVTLILLGLLIFGVWFAYSRGYFERTKKGTAPGKKVIYSQPSTRSEGEFKQTSSFLV.

A signal peptide spans 1 to 26; that stretch reads MGTEGKAGRKLLFLFTSMILGSLVQG. The Extracellular portion of the chain corresponds to 27–238; that stretch reads KGSVYTAQSD…MDAVELNVGG (212 aa). 2 consecutive Ig-like V-type domains span residues 28–122 and 134–230; these read GSVY…GEVS and PTIS…AHMD. A glycan (N-linked (GlcNAc...) asparagine) is linked at N42. Disulfide bonds link C49–C108 and C152–C212. The N-linked (GlcNAc...) asparagine glycan is linked to N185. The helical transmembrane segment at 239–259 threads the bilayer; sequence IVAAVLVTLILLGLLIFGVWF. The Cytoplasmic segment spans residues 260-299; the sequence is AYSRGYFERTKKGTAPGKKVIYSQPSTRSEGEFKQTSSFL. S282, S285, and S288 each carry phosphoserine.

It belongs to the immunoglobulin superfamily. Interacts with the ninth PDZ domain of MPDZ. Interacts with the first PDZ domain of PARD3. The association between PARD3 and PARD6B probably disrupts this interaction. Interacts with ITGAL (via I-domain). Interacts with CD151.

It localises to the cell junction. Its subcellular location is the tight junction. It is found in the cell membrane. In terms of biological role, seems to play a role in epithelial tight junction formation. Appears early in primordial forms of cell junctions and recruits PARD3. The association of the PARD6-PARD3 complex may prevent the interaction of PARD3 with JAM1, thereby preventing tight junction assembly. Plays a role in regulating monocyte transmigration involved in integrity of epithelial barrier. Ligand for integrin alpha-L/beta-2 involved in memory T-cell and neutrophil transmigration. Involved in platelet activation. In Mus musculus (Mouse), this protein is Junctional adhesion molecule A (F11r).